A 184-amino-acid chain; its full sequence is ATP synthase subunit delta (184 aa).

This sequence belongs to the ATPase delta chain family. As to quaternary structure, F-type ATPases have 2 components, F(1) - the catalytic core - and F(0) - the membrane proton channel. F(1) has five subunits: alpha(3), beta(3), gamma(1), delta(1), epsilon(1). F(0) has three main subunits: a(1), b(2) and c(10-14). The alpha and beta chains form an alternating ring which encloses part of the gamma chain. F(1) is attached to F(0) by a central stalk formed by the gamma and epsilon chains, while a peripheral stalk is formed by the delta and b chains.

It localises to the cell inner membrane. In terms of biological role, f(1)F(0) ATP synthase produces ATP from ADP in the presence of a proton or sodium gradient. F-type ATPases consist of two structural domains, F(1) containing the extramembraneous catalytic core and F(0) containing the membrane proton channel, linked together by a central stalk and a peripheral stalk. During catalysis, ATP synthesis in the catalytic domain of F(1) is coupled via a rotary mechanism of the central stalk subunits to proton translocation. Functionally, this protein is part of the stalk that links CF(0) to CF(1). It either transmits conformational changes from CF(0) to CF(1) or is implicated in proton conduction. The protein is ATP synthase subunit delta of Zymomonas mobilis subsp. mobilis (strain ATCC 31821 / ZM4 / CP4).